Reading from the N-terminus, the 232-residue chain is Ribonuclease 3 (232 aa).

The RNase III domain occupies 5–134 (QTVLKNHFEI…FLGALLLDKD (130 aa)). Residue Glu-47 participates in Mg(2+) binding. Asp-51 is an active-site residue. Positions 120 and 123 each coordinate Mg(2+). Glu-123 is a catalytic residue. The DRBM domain occupies 160–229 (DYKTHLQELL…AKNAVEKGLD (70 aa)).

It belongs to the ribonuclease III family. As to quaternary structure, homodimer. Mg(2+) serves as cofactor.

It is found in the cytoplasm. The catalysed reaction is Endonucleolytic cleavage to 5'-phosphomonoester.. In terms of biological role, digests double-stranded RNA. Involved in the processing of primary rRNA transcript to yield the immediate precursors to the large and small rRNAs (23S and 16S). Processes some mRNAs, and tRNAs when they are encoded in the rRNA operon. Processes pre-crRNA and tracrRNA of type II CRISPR loci if present in the organism. The polypeptide is Ribonuclease 3 (Streptococcus pneumoniae (strain ATCC BAA-255 / R6)).